The following is a 552-amino-acid chain: Ferry endosomal RAB5 effector complex subunit 3 (552 aa).

The interval 383–403 (LKESLDSGNQNGGNDDKTKNA) is disordered.

In terms of assembly, component of the FERRY complex composed of five subunits, TBCK, PPP1R21, FERRY3, CRYZL1 and GATD1 with a ratio of 1:2:1:2:4, respectively.

Its subcellular location is the cytoplasm. The protein localises to the early endosome. Functionally, component of the FERRY complex (Five-subunit Endosomal Rab5 and RNA/ribosome intermediary). The FERRY complex directly interacts with mRNAs and RAB5A, and functions as a RAB5A effector involved in the localization and the distribution of specific mRNAs most likely by mediating their endosomal transport. The complex recruits mRNAs and ribosomes to early endosomes through direct mRNA-interaction. Plays a role in mast cell degranulation. This chain is Ferry endosomal RAB5 effector complex subunit 3, found in Homo sapiens (Human).